We begin with the raw amino-acid sequence, 734 residues long: Phosphoribosylformylglycinamidine synthase subunit PurL (734 aa).

Histidine 46 is a catalytic residue. ATP is bound by residues tyrosine 49 and lysine 88. Glutamate 90 is a Mg(2+) binding site. Substrate contacts are provided by residues 91–94 (SHNH) and arginine 113. The active-site Proton acceptor is the histidine 92. Mg(2+) is bound at residue aspartate 114. Residue glutamine 237 coordinates substrate. Aspartate 265 is a binding site for Mg(2+). 309 to 311 (ESQ) provides a ligand contact to substrate. Residues aspartate 489 and glycine 526 each coordinate ATP. Asparagine 527 lines the Mg(2+) pocket. Residue serine 529 coordinates substrate.

Belongs to the FGAMS family. As to quaternary structure, monomer. Part of the FGAM synthase complex composed of 1 PurL, 1 PurQ and 2 PurS subunits.

It localises to the cytoplasm. The enzyme catalyses N(2)-formyl-N(1)-(5-phospho-beta-D-ribosyl)glycinamide + L-glutamine + ATP + H2O = 2-formamido-N(1)-(5-O-phospho-beta-D-ribosyl)acetamidine + L-glutamate + ADP + phosphate + H(+). It functions in the pathway purine metabolism; IMP biosynthesis via de novo pathway; 5-amino-1-(5-phospho-D-ribosyl)imidazole from N(2)-formyl-N(1)-(5-phospho-D-ribosyl)glycinamide: step 1/2. Part of the phosphoribosylformylglycinamidine synthase complex involved in the purines biosynthetic pathway. Catalyzes the ATP-dependent conversion of formylglycinamide ribonucleotide (FGAR) and glutamine to yield formylglycinamidine ribonucleotide (FGAM) and glutamate. The FGAM synthase complex is composed of three subunits. PurQ produces an ammonia molecule by converting glutamine to glutamate. PurL transfers the ammonia molecule to FGAR to form FGAM in an ATP-dependent manner. PurS interacts with PurQ and PurL and is thought to assist in the transfer of the ammonia molecule from PurQ to PurL. This is Phosphoribosylformylglycinamidine synthase subunit PurL from Gluconobacter oxydans (strain 621H) (Gluconobacter suboxydans).